The primary structure comprises 244 residues: uncharacterized protein (244 aa).

Over residues 1–11 the composition is skewed to basic residues; sequence MSRRSRSRSRS. Disordered regions lie at residues 1-104 and 213-244; these read MSRR…TLNE and ARQKSDMKKNEQQAILNKSGNSRAPIKFKFGK. Residues 12–31 show a composition bias toward basic and acidic residues; that stretch reads PKRDREERKRREDRDRDRER. Residues 32 to 46 are compositionally biased toward basic residues; the sequence is KRDRKDRERKRRHRS. Over residues 63–75 the composition is skewed to basic and acidic residues; the sequence is FREERRRRERNES. A compositionally biased stretch (pro residues) spans 77–89; that stretch reads KLPPPPPPPPSDP. A compositionally biased stretch (basic and acidic residues) spans 213–223; that stretch reads ARQKSDMKKNE. Residues 224–234 are compositionally biased toward polar residues; the sequence is QQAILNKSGNS.

This is an uncharacterized protein from Caenorhabditis elegans.